Consider the following 112-residue polypeptide: Cytochrome c2 (112 aa).

Cysteine 14, cysteine 17, histidine 18, and methionine 91 together coordinate heme c.

It belongs to the cytochrome c family. Post-translationally, binds 1 heme c group covalently per subunit.

In terms of biological role, cytochrome c2 is found mainly in purple, non-sulfur, photosynthetic bacteria where it functions as the electron donor to the oxidized bacteriochlorophyll in the photophosphorylation pathway. However, it may also have a role in the respiratory chain and is found in some non-photosynthetic bacteria. The chain is Cytochrome c2 (cycA) from Rhodospirillum rubrum.